The chain runs to 196 residues: MDDTLFQLKFTAKQLEKLAKKAEKDSKAEQAKVKKALQQKNVECARVYAENAIRKKNEGVNWLRMASRVDAVASKVQTAVTMKGVTKNMAQVTKALDKALSAMDLQKVSAVMDRFEQQVQNLDVHTSVMEDSVSSATTLTTPQEQVDSLIVQIAEENGLEVLDQLSQLPEGASAVGESSVRSQEDQLSRRLAALRN.

Methionine 1 bears the N-acetylmethionine mark. Positions 5 to 42 form a coiled coil; it reads LFQLKFTAKQLEKLAKKAEKDSKAEQAKVKKALQQKNV. Phosphoserine is present on serine 101. The stretch at 102-124 forms a coiled coil; it reads AMDLQKVSAVMDRFEQQVQNLDV. A Phosphoserine modification is found at serine 173. The short motif at 185–195 is the MIT-interacting motif element; it reads DQLSRRLAALR.

The protein belongs to the SNF7 family. As to quaternary structure, probable peripherally associated component of the endosomal sorting required for transport complex III (ESCRT-III). ESCRT-III components are thought to multimerize to form a flat lattice on the perimeter membrane of the endosome. Several assembly forms of ESCRT-III may exist that interact and act sequentially. Self-associates. Interacts with CHMP1B. Interacts with VPS4A. Interacts with VPS4B. Interacts with PHF1. Interacts with IST1. Interacts with MITD1. In terms of tissue distribution, highly expressed in adult heart, kidney and liver. Expressed at lower levels in adult colon, spleen, lung, brain, testis and muscle. Also expressed in myoblasts and embryo fibroblasts.

The protein localises to the cytoplasm. It localises to the endosome membrane. Its subcellular location is the nucleus matrix. Probable peripherally associated component of the endosomal sorting required for transport complex III (ESCRT-III) which is involved in multivesicular bodies (MVBs) formation and sorting of endosomal cargo proteins into MVBs. MVBs contain intraluminal vesicles (ILVs) that are generated by invagination and scission from the limiting membrane of the endosome and mostly are delivered to lysosomes enabling degradation of membrane proteins, such as stimulated growth factor receptors, lysosomal enzymes and lipids. The MVB pathway appears to require the sequential function of ESCRT-O, -I,-II and -III complexes. ESCRT-III proteins mostly dissociate from the invaginating membrane before the ILV is released. The ESCRT machinery also functions in topologically equivalent membrane fission events, such as the terminal stages of cytokinesis. ESCRT-III proteins are believed to mediate the necessary vesicle extrusion and/or membrane fission activities, possibly in conjunction with the AAA ATPase VPS4. Involved in cytokinesis. Involved in recruiting VPS4A and/or VPS4B to the midbody of dividing cells. May also be involved in chromosome condensation. Targets the Polycomb group (PcG) protein BMI1/PCGF4 to regions of condensed chromatin. May play a role in stable cell cycle progression and in PcG gene silencing. This chain is Charged multivesicular body protein 1a (Chmp1a), found in Mus musculus (Mouse).